The primary structure comprises 97 residues: Putative membrane protein insertion efficiency factor (97 aa).

Belongs to the UPF0161 family.

Its subcellular location is the cell inner membrane. Functionally, could be involved in insertion of integral membrane proteins into the membrane. The polypeptide is Putative membrane protein insertion efficiency factor (Chlamydia muridarum (strain MoPn / Nigg)).